Reading from the N-terminus, the 184-residue chain is Ribosome-recycling factor (184 aa).

It belongs to the RRF family.

It is found in the cytoplasm. Its function is as follows. Responsible for the release of ribosomes from messenger RNA at the termination of protein biosynthesis. May increase the efficiency of translation by recycling ribosomes from one round of translation to another. In Bifidobacterium animalis subsp. lactis (strain AD011), this protein is Ribosome-recycling factor.